Reading from the N-terminus, the 268-residue chain is Single-stranded DNA-binding protein WHY3, chloroplastic (268 aa).

The transit peptide at 1–75 directs the protein to the chloroplast; the sequence is MSQLLSSPPM…KQRFGDSSSS (75 aa). The required for ssDNA binding stretch occupies residues 93-98; it reads KGKAAL. Residues 171 to 185 carry the Nuclear localization signal motif; it reads KGKGSDEGKVRKVLK.

It belongs to the Whirly family. Homotetramer.

Its subcellular location is the plastid. It is found in the chloroplast. The protein localises to the nucleus. Its function is as follows. Single-stranded DNA-binding protein that functions in both chloroplasts and nucleus. In chloroplasts, maintains plastid genome stability by preventing break-induced and short homology-dependent illegitimate recombinations. In the nucleus, is recruited to a distal element upstream of the kinesin KP1 to mediate the transcriptional repression of KP1. Can bind double-stranded DNA in vivo. This Arabidopsis thaliana (Mouse-ear cress) protein is Single-stranded DNA-binding protein WHY3, chloroplastic (WHY3).